A 217-amino-acid chain; its full sequence is Ribosomal RNA large subunit methyltransferase E (217 aa).

S-adenosyl-L-methionine is bound by residues Gly71, Trp73, Asp91, Asp107, and Asp132. Lys172 serves as the catalytic Proton acceptor.

It belongs to the class I-like SAM-binding methyltransferase superfamily. RNA methyltransferase RlmE family.

Its subcellular location is the cytoplasm. It catalyses the reaction uridine(2552) in 23S rRNA + S-adenosyl-L-methionine = 2'-O-methyluridine(2552) in 23S rRNA + S-adenosyl-L-homocysteine + H(+). Its function is as follows. Specifically methylates the uridine in position 2552 of 23S rRNA at the 2'-O position of the ribose in the fully assembled 50S ribosomal subunit. This chain is Ribosomal RNA large subunit methyltransferase E, found in Psychromonas ingrahamii (strain DSM 17664 / CCUG 51855 / 37).